A 317-amino-acid polypeptide reads, in one-letter code: Melanocyte-stimulating hormone receptor (317 aa).

Over 1 to 37 (MAVQGSQRRLLGSLNSTPTAIPQLGLAANQTGAWCLE) the chain is Extracellular. N29 carries an N-linked (GlcNAc...) asparagine glycan. A helical transmembrane segment spans residues 38 to 63 (VSIPDGLFLSLGLVSLVENVLVVATI). Residues 64–72 (AKNRNLHSP) are Cytoplasmic-facing. A helical transmembrane segment spans residues 73–93 (MYCFICCLALSDLLVSGGNVL). The Extracellular portion of the chain corresponds to 94–118 (ETAVILLLEAGALAARAAVVQQLDN). Residues 119–140 (VIDVITCSSMLSSLCFLGAIAV) traverse the membrane as a helical segment. Residues 141–163 (DRYISIFYALRYHSIVTLPRARR) are Cytoplasmic-facing. The helical transmembrane segment at 164–183 (AIAAIWVASVLFSTLFIAYY) threads the bilayer. Topologically, residues 184–191 (DHAAVLLC) are extracellular. The chain crosses the membrane as a helical span at residues 192-211 (LVVFFLAMLVLMAVLYVHML). Residues 212 to 240 (ARACQHAQGIARLHKRQRPVHQGFGLKGA) lie on the Cytoplasmic side of the membrane. A helical transmembrane segment spans residues 241 to 266 (VTLTILLGIFFLCWGPFFLHLTLIVL). The Extracellular segment spans residues 267–279 (CPQHPTCSCIFKN). Residues 280-300 (FNLFLALIICNAIIDPLIYAF) traverse the membrane as a helical segment. Residues 301–317 (RSQELRRTLKEVLTCSW) are Cytoplasmic-facing. A lipid anchor (S-palmitoyl cysteine) is attached at C315.

Belongs to the G-protein coupled receptor 1 family. Interacts with MGRN1, but does not undergo MGRN1-mediated ubiquitination; this interaction competes with GNAS-binding and thus inhibits agonist-induced cAMP production. Interacts with OPN3; the interaction results in a decrease in MC1R-mediated cAMP signaling and ultimately a decrease in melanin production in melanocytes.

The protein localises to the cell membrane. Functionally, receptor for MSH (alpha, beta and gamma) and ACTH. The activity of this receptor is mediated by G proteins which activate adenylate cyclase. Mediates melanogenesis, the production of eumelanin (black/brown) and phaeomelanin (red/yellow), via regulation of cAMP signaling in melanocytes. In Pongo pygmaeus (Bornean orangutan), this protein is Melanocyte-stimulating hormone receptor (MC1R).